A 99-amino-acid chain; its full sequence is MARKSLIQREKKRQALERKYHLIRQSLEEKSKVSSLDDKWEIHRKLQSSPRNSAPTRLHRRCSSTGRPRANYRDFGLSGHILREMAHACLLPGIKKSSW.

Residues 46-66 (LQSSPRNSAPTRLHRRCSSTG) form a disordered region.

It belongs to the universal ribosomal protein uS14 family. As to quaternary structure, part of the 30S ribosomal subunit.

The protein resides in the plastid. It is found in the chloroplast. Functionally, binds 16S rRNA, required for the assembly of 30S particles. This chain is Small ribosomal subunit protein uS14c, found in Pinus thunbergii (Japanese black pine).